The primary structure comprises 161 residues: Phosphopantetheine adenylyltransferase (161 aa).

Residue Thr9 coordinates substrate. Residues 9–10 (TF) and His17 contribute to the ATP site. Substrate-binding residues include Lys41, Leu73, and Arg87. Residues 88–90 (GLR), Glu98, and 123–129 (YQFISGT) contribute to the ATP site.

The protein belongs to the bacterial CoaD family. Homohexamer. It depends on Mg(2+) as a cofactor.

Its subcellular location is the cytoplasm. It catalyses the reaction (R)-4'-phosphopantetheine + ATP + H(+) = 3'-dephospho-CoA + diphosphate. Its pathway is cofactor biosynthesis; coenzyme A biosynthesis; CoA from (R)-pantothenate: step 4/5. Functionally, reversibly transfers an adenylyl group from ATP to 4'-phosphopantetheine, yielding dephospho-CoA (dPCoA) and pyrophosphate. This is Phosphopantetheine adenylyltransferase from Cupriavidus necator (strain ATCC 17699 / DSM 428 / KCTC 22496 / NCIMB 10442 / H16 / Stanier 337) (Ralstonia eutropha).